Reading from the N-terminus, the 2248-residue chain is Zinc finger protein 407 (2248 aa).

Over residues 1 to 32 the composition is skewed to basic and acidic residues; sequence MMDSENKPENDEDEKINKEAQDLTKLSSHNED. Residues 1–84 form a disordered region; the sequence is MMDSENKPEN…RRKLDEAEPL (84 aa). 3 consecutive C2H2-type zinc fingers follow at residues 186 to 208, 215 to 238, and 244 to 268; these read LKCS…AESH, HTCC…KQAH, and FSCD…GKTH. 2 disordered regions span residues 291 to 322 and 494 to 515; these read KKSR…GLRN and SETQ…GLHS. Positions 494–504 are enriched in polar residues; the sequence is SETQEAEQGQG. C2H2-type zinc fingers lie at residues 528-551, 557-581, and 615-639; these read CACT…KRCH, FYCR…SNQH, and FLCT…TEKH. The interval 667–700 is disordered; the sequence is ESENAKESMDDSGKASQEEPLKSRVSHGNEVRHS. Over residues 669–699 the composition is skewed to basic and acidic residues; sequence ENAKESMDDSGKASQEEPLKSRVSHGNEVRH. The C2H2-type 7 zinc finger occupies 705–728; it reads FQCKKCFYKTRSSTVLTRHIKLRH. The segment at 821 to 847 is disordered; sequence LSQSGGSTKDDELASTTTPKRGRPKGN. C2H2-type zinc fingers lie at residues 850–873 and 879–903; these read RTCS…RRKH and YLCK…TKKH. Positions 910–962 are disordered; sequence EASGKHSSDIIVGPEGGSLEAGKKNAGSAVTMSDEHANKPAESPTSVLEKPDR. 2 C2H2-type zinc fingers span residues 1017–1040 and 1046–1070; these read NKCL…KRKH and FYCM…TEKH. Residue Ser1262 is modified to Phosphoserine. 2 consecutive C2H2-type zinc fingers follow at residues 1444-1468 and 1486-1509; these read FHCL…SAGH and FKCV…KGQH. A C2H2-type 14; degenerate zinc finger spans residues 1537–1561; that stretch reads NVCKYCGKMCRSSNSMAFLAHIRTH. 8 C2H2-type zinc fingers span residues 1567-1589, 1595-1618, 1628-1650, 1656-1680, 1686-1708, 1714-1736, 1742-1767, and 1773-1796; these read FKCK…VKRH, YKCH…LGKH, FTCH…MKLH, FKCT…YRTH, FLCD…RRQH, FKCD…KRVH, YRCP…TGKH, and YNCP…KEQH.

It localises to the nucleus. May be involved in transcriptional regulation. The protein is Zinc finger protein 407 (ZNF407) of Homo sapiens (Human).